Here is a 386-residue protein sequence, read N- to C-terminus: MRSQVIEYPMSLVRLAHELPIEAPRTAWLDSIIKGDCVSALERLPDHSVDVIFADPPYNLQLGGDLHRPDQSMVSAVDDHWDQFESFQAYDAFTRAWLLACRRVLKPNGTIWVIGSYHNIFRVGTQLQDLGFWLLNDIVWRKTNPMPNFRGRRFQNAHETLIWASREQKGKGYTFNYEAMKAANDDVQMRSDWLFPICTGSERLKDENGDKVHPTQKPEALLARIMMASSKPGDVILDPFFGSGTTGAVAKRLGRHFVGIEREQPYIDAATARINAVEPLGKAELTVMTGKRAEPRVAFTSVMEAGLLRPGTVLCDERRRFAAIVRADGTLTANGEAGSIHRIGARVQGFDACNGWTFWHFEENGVLKPIDALRKIIREQMAAAGA.

The region spanning 280–382 is the RAMA domain; sequence LGKAELTVMT…LRKIIREQMA (103 aa).

This sequence belongs to the N(4)/N(6)-methyltransferase family.

It catalyses the reaction a 2'-deoxyadenosine in DNA + S-adenosyl-L-methionine = an N(6)-methyl-2'-deoxyadenosine in DNA + S-adenosyl-L-homocysteine + H(+). Its function is as follows. A beta subtype methylase that recognizes the double-stranded sequence 5'-GANTC-3' and methylates A-2 on both strands. CcrM-mediated methylation has important cellular functions. Contributes to the accurate cell-cycle control of DNA replication and cellular morphology. The polypeptide is DNA methyltransferase CcrM (ccrM) (Brucella abortus (strain S19)).